The primary structure comprises 182 residues: Crossover junction endodeoxyribonuclease RuvC (182 aa).

Active-site residues include aspartate 7, glutamate 69, and aspartate 141. 3 residues coordinate Mg(2+): aspartate 7, glutamate 69, and aspartate 141.

This sequence belongs to the RuvC family. Homodimer which binds Holliday junction (HJ) DNA. The HJ becomes 2-fold symmetrical on binding to RuvC with unstacked arms; it has a different conformation from HJ DNA in complex with RuvA. In the full resolvosome a probable DNA-RuvA(4)-RuvB(12)-RuvC(2) complex forms which resolves the HJ. The cofactor is Mg(2+).

Its subcellular location is the cytoplasm. The enzyme catalyses Endonucleolytic cleavage at a junction such as a reciprocal single-stranded crossover between two homologous DNA duplexes (Holliday junction).. In terms of biological role, the RuvA-RuvB-RuvC complex processes Holliday junction (HJ) DNA during genetic recombination and DNA repair. Endonuclease that resolves HJ intermediates. Cleaves cruciform DNA by making single-stranded nicks across the HJ at symmetrical positions within the homologous arms, yielding a 5'-phosphate and a 3'-hydroxyl group; requires a central core of homology in the junction. The consensus cleavage sequence is 5'-(A/T)TT(C/G)-3'. Cleavage occurs on the 3'-side of the TT dinucleotide at the point of strand exchange. HJ branch migration catalyzed by RuvA-RuvB allows RuvC to scan DNA until it finds its consensus sequence, where it cleaves and resolves the cruciform DNA. The protein is Crossover junction endodeoxyribonuclease RuvC of Polaromonas sp. (strain JS666 / ATCC BAA-500).